Reading from the N-terminus, the 849-residue chain is Period circadian protein (849 aa).

Positions 1-13 are enriched in polar residues; it reads MNNMDGSENNAKV. A disordered region spans residues 1-79; it reads MNNMDGSENN…LKKKKQVETL (79 aa). Composition is skewed to low complexity over residues 14 to 27 and 35 to 58; these read SDSA…NSQS and STHS…SSSS. The short motif at 63–74 is the Nuclear localization signal element; that stretch reads DQKKEKELKKKK. PAS domains lie at 166 to 296 and 314 to 416; these read NGFS…QAVP and FVIR…YIIE. The disordered stretch occupies residues 680 to 746; the sequence is NNTPSVYEKP…VSTSSQWSSS (67 aa). The span at 706–720 shows a compositional bias: basic residues; that stretch reads NKHHCPSSRQFRRKQ. The segment covering 735–746 has biased composition (low complexity); sequence NPVSTSSQWSSS.

In terms of assembly, forms a heterodimer with timeless (TIM); the complex then translocates into the nucleus. Post-translationally, phosphorylated with a circadian rhythmicity.

It is found in the nucleus. In terms of biological role, involved in the generation of biological rhythms. The biological cycle depends on the rhythmic formation and nuclear localization of the tim-per complex. Light induces the degradation of tim, which promotes elimination of per. Nuclear activity of the heterodimer coordinatively regulates per and tim transcription negative feedback loop. Behaves as a negative element in circadian transcriptional loop. Does not appear to bind DNA, suggesting indirect transcriptional inhibition. Expression exhibits prominent circadian variation in adult heads and in particular in the photoreceptor nuclei. This chain is Period circadian protein (per), found in Antheraea pernyi (Chinese oak silk moth).